A 212-amino-acid chain; its full sequence is Large ribosomal subunit protein bL25 (212 aa).

The disordered stretch occupies residues 1–25; it reads MSQSTIHKIAVKKRTETGKNENNRL. A compositionally biased stretch (basic and acidic residues) spans 13 to 24; that stretch reads KRTETGKNENNR.

This sequence belongs to the bacterial ribosomal protein bL25 family. CTC subfamily. As to quaternary structure, part of the 50S ribosomal subunit; part of the 5S rRNA/L5/L18/L25 subcomplex. Contacts the 5S rRNA. Binds to the 5S rRNA independently of L5 and L18.

In terms of biological role, this is one of the proteins that binds to the 5S RNA in the ribosome where it forms part of the central protuberance. The protein is Large ribosomal subunit protein bL25 of Leptospira borgpetersenii serovar Hardjo-bovis (strain L550).